The sequence spans 241 residues: Terpene cyclase pyr4 (241 aa).

A run of 7 helical transmembrane segments spans residues 20–40 (IADWALLAQGLGWSINYLAMI), 49–69 (YGMAILPLCCNFAWEFVYSVI), 79–99 (AVLTTWMILNLFVMYTAIKFA), 113–133 (LPWIFPVAIAAFTAGHLALAA), 141–161 (ANWGAFLCFELLTSGAVCQLM), 168–188 (GASYTIWLSRFLGSYIGGIFL), and 206–226 (FVTWHGLMCFSLDIAYVTFLW).

This sequence belongs to the paxB family.

It localises to the membrane. The catalysed reaction is 2-oxo-3-[(8S)-epoxy-(2E,6E)-farnesyl]-6-(pyridin-3-yl)-2H-pyran-4-olate + H(+) = deacetylpyripyropene E. It functions in the pathway secondary metabolite biosynthesis; terpenoid biosynthesis. In terms of biological role, terpene cyclase; part of the gene cluster that mediates the biosynthesis of pyripyropene A, a specific human acyl-coenzyme A:cholesterol acyltransferase 2 inhibitor. The first step of the pathway is the synthesis of nicotinyl-CoA from nicotinic acid by the nicotinic acid-CoA ligase pyr1. Nicotinyl-CoA is then a substrate of polyketide synthase pyr2 to produce 4-hydroxy-6-(3-pyridinyl)-2H-pyran-2-one (HPPO) which is further prenylated by the polyprenyl transferase pyr6 to yield farnesyl-HPPO. The next steps consist of an epoxidation of farnesyl-HPPO to epoxyfarnesyl-HPPO by FAD-dependent monooxygenase pyr5 and a cyclization of the terpenoid portion by the terpene cyclase pyr4 to yield deacetyl-pyripyropene E. The 2 cytochrome P450 monooxygenases pyr3 and pyr9, and the 2 acetyltransferases pyr7 and pyr8 are involved in the conversion of deacetyl-pyripyropene E into pyripyropene A through several cycles of oxidation and acetylation steps. Pyr7 acetylates deacetyl-pyripyropene E to pyripyropene E which is oxidized to 11-deacetyl-pyripyropene O by pyr3, which is in turn acetylated into pyripyropene O by pyr8. Pyripyropene O is then oxidized to deacetyl-pyripyropene A by pyr9. Deacetyl-pyripyropene A is finally acetylated to pyripyropene A by pyr8. The protein is Terpene cyclase pyr4 of Aspergillus fumigatus (strain ATCC MYA-4609 / CBS 101355 / FGSC A1100 / Af293) (Neosartorya fumigata).